Reading from the N-terminus, the 152-residue chain is Deoxyuridine 5'-triphosphate nucleotidohydrolase (152 aa).

Substrate-binding positions include 65–67 (RSG), asparagine 78, and 82–84 (TID).

Belongs to the dUTPase family. The cofactor is Mg(2+).

It carries out the reaction dUTP + H2O = dUMP + diphosphate + H(+). It functions in the pathway pyrimidine metabolism; dUMP biosynthesis; dUMP from dCTP (dUTP route): step 2/2. This enzyme is involved in nucleotide metabolism: it produces dUMP, the immediate precursor of thymidine nucleotides and it decreases the intracellular concentration of dUTP so that uracil cannot be incorporated into DNA. This Chlorobaculum tepidum (strain ATCC 49652 / DSM 12025 / NBRC 103806 / TLS) (Chlorobium tepidum) protein is Deoxyuridine 5'-triphosphate nucleotidohydrolase.